Consider the following 365-residue polypeptide: Succinyl-diaminopimelate desuccinylase (365 aa).

Zn(2+) is bound at residue histidine 64. Residue aspartate 66 is part of the active site. Aspartate 95 is a Zn(2+) binding site. The active-site Proton acceptor is glutamate 125. Zn(2+)-binding residues include glutamate 126, glutamate 154, and histidine 339.

This sequence belongs to the peptidase M20A family. DapE subfamily. As to quaternary structure, homodimer. Requires Zn(2+) as cofactor. The cofactor is Co(2+).

It catalyses the reaction N-succinyl-(2S,6S)-2,6-diaminopimelate + H2O = (2S,6S)-2,6-diaminopimelate + succinate. Its pathway is amino-acid biosynthesis; L-lysine biosynthesis via DAP pathway; LL-2,6-diaminopimelate from (S)-tetrahydrodipicolinate (succinylase route): step 3/3. In terms of biological role, catalyzes the hydrolysis of N-succinyl-L,L-diaminopimelic acid (SDAP), forming succinate and LL-2,6-diaminopimelate (DAP), an intermediate involved in the bacterial biosynthesis of lysine and meso-diaminopimelic acid, an essential component of bacterial cell walls. This Nautilia profundicola (strain ATCC BAA-1463 / DSM 18972 / AmH) protein is Succinyl-diaminopimelate desuccinylase.